A 148-amino-acid chain; its full sequence is UPF0735 ACT domain-containing protein Dred_1164 (148 aa).

The 76-residue stretch at 72-147 (TLALLMEHQP…GVREVRLVGQ (76 aa)) folds into the ACT domain.

The protein belongs to the UPF0735 family.

The chain is UPF0735 ACT domain-containing protein Dred_1164 from Desulforamulus reducens (strain ATCC BAA-1160 / DSM 100696 / MI-1) (Desulfotomaculum reducens).